The chain runs to 670 residues: Probable metal-nicotianamine transporter YSL4 (670 aa).

Transmembrane regions (helical) follow at residues 35–55 (ITIR…IITH), 59–79 (LTIG…FFFI), 107–127 (CVVS…LIAM), 151–171 (GLWW…FCLV), 273–293 (LVNC…WPFI), 318–338 (VFIA…KIIV), 389–409 (FAVS…PLIF), 416–436 (FVLC…YGAG), 450–470 (GLFI…GLAA), 507–527 (LGTA…WTAF), 559–579 (PKHC…VNLI), 601–621 (FYIG…MLVW), and 636–656 (VASG…ILSI).

The protein belongs to the YSL (TC 2.A.67.2) family.

The protein localises to the membrane. Its function is as follows. May be involved in the transport of nicotianamine-chelated metals. This chain is Probable metal-nicotianamine transporter YSL4 (YSL4), found in Arabidopsis thaliana (Mouse-ear cress).